We begin with the raw amino-acid sequence, 176 residues long: 3-hydroxyanthranilate 3,4-dioxygenase (176 aa).

Arg-44 provides a ligand contact to O2. The Fe cation site is built by His-48, Glu-54, and His-92. Glu-54 is a binding site for substrate. Substrate contacts are provided by Arg-96 and Glu-106. Residues Cys-121, Cys-124, Cys-158, and Cys-161 each coordinate Fe cation.

This sequence belongs to the 3-HAO family. As to quaternary structure, homodimer. Fe(2+) is required as a cofactor.

It carries out the reaction 3-hydroxyanthranilate + O2 = (2Z,4Z)-2-amino-3-carboxymuconate 6-semialdehyde. It functions in the pathway cofactor biosynthesis; NAD(+) biosynthesis; quinolinate from L-kynurenine: step 3/3. Catalyzes the oxidative ring opening of 3-hydroxyanthranilate to 2-amino-3-carboxymuconate semialdehyde, which spontaneously cyclizes to quinolinate. The polypeptide is 3-hydroxyanthranilate 3,4-dioxygenase (Xanthomonas campestris pv. campestris (strain 8004)).